The primary structure comprises 160 residues: Non-secretory ribonuclease (160 aa).

Positions 1–27 are cleaved as a signal peptide; sequence MVPKLFTSPICLLLLLGLMGVEGSLHA. Residue Trp34 is glycosylated (C-linked (Man) tryptophan). His42 acts as the Proton acceptor in catalysis. A glycan (N-linked (GlcNAc...) asparagine) is linked at Asn44. Cystine bridges form between Cys50-Cys110, Cys64-Cys122, Cys82-Cys137, and Cys89-Cys98. Residue Tyr60 is modified to 3'-nitrotyrosine. Residue 65-69 coordinates substrate; that stretch reads KNQNT. N-linked (GlcNAc...) asparagine glycans are attached at residues Asn92, Asn111, and Asn138. The Proton donor role is filled by His155.

It belongs to the pancreatic ribonuclease family. Interacts with and forms a tight 1:1 complex with RNH1. Dimerization of two such complexes may occur.

It localises to the lysosome. The protein localises to the cytoplasmic granule. It catalyses the reaction an [RNA] containing cytidine + H2O = an [RNA]-3'-cytidine-3'-phosphate + a 5'-hydroxy-ribonucleotide-3'-[RNA].. It carries out the reaction an [RNA] containing uridine + H2O = an [RNA]-3'-uridine-3'-phosphate + a 5'-hydroxy-ribonucleotide-3'-[RNA].. In terms of biological role, this is a non-secretory ribonuclease. It is a pyrimidine specific nuclease with a slight preference for U. Cytotoxin and helminthotoxin. Possesses a wide variety of biological activities. The chain is Non-secretory ribonuclease (RNASE2) from Macaca nemestrina (Pig-tailed macaque).